The following is a 401-amino-acid chain: Nicotinate phosphoribosyltransferase (401 aa).

His221 carries the post-translational modification Phosphohistidine; by autocatalysis.

Belongs to the NAPRTase family. In terms of processing, transiently phosphorylated on a His residue during the reaction cycle. Phosphorylation strongly increases the affinity for substrates and increases the rate of nicotinate D-ribonucleotide production. Dephosphorylation regenerates the low-affinity form of the enzyme, leading to product release.

The enzyme catalyses nicotinate + 5-phospho-alpha-D-ribose 1-diphosphate + ATP + H2O = nicotinate beta-D-ribonucleotide + ADP + phosphate + diphosphate. It functions in the pathway cofactor biosynthesis; NAD(+) biosynthesis; nicotinate D-ribonucleotide from nicotinate: step 1/1. In terms of biological role, catalyzes the synthesis of beta-nicotinate D-ribonucleotide from nicotinate and 5-phospho-D-ribose 1-phosphate at the expense of ATP. This is Nicotinate phosphoribosyltransferase from Pectobacterium carotovorum subsp. carotovorum (strain PC1).